A 78-amino-acid chain; its full sequence is Acyl carrier protein (78 aa).

Residues 2–77 (SDTAERIKKI…DAVSYIDEHK (76 aa)) form the Carrier domain. S37 carries the post-translational modification O-(pantetheine 4'-phosphoryl)serine.

The protein belongs to the acyl carrier protein (ACP) family. Post-translationally, 4'-phosphopantetheine is transferred from CoA to a specific serine of apo-ACP by AcpS. This modification is essential for activity because fatty acids are bound in thioester linkage to the sulfhydryl of the prosthetic group.

It is found in the cytoplasm. Its pathway is lipid metabolism; fatty acid biosynthesis. Functionally, carrier of the growing fatty acid chain in fatty acid biosynthesis. This is Acyl carrier protein from Zymomonas mobilis subsp. mobilis (strain ATCC 31821 / ZM4 / CP4).